The chain runs to 200 residues: 3-isopropylmalate dehydratase small subunit (200 aa).

This sequence belongs to the LeuD family. LeuD type 1 subfamily. In terms of assembly, heterodimer of LeuC and LeuD.

The catalysed reaction is (2R,3S)-3-isopropylmalate = (2S)-2-isopropylmalate. The protein operates within amino-acid biosynthesis; L-leucine biosynthesis; L-leucine from 3-methyl-2-oxobutanoate: step 2/4. Functionally, catalyzes the isomerization between 2-isopropylmalate and 3-isopropylmalate, via the formation of 2-isopropylmaleate. The chain is 3-isopropylmalate dehydratase small subunit from Aliivibrio fischeri (strain MJ11) (Vibrio fischeri).